The sequence spans 1376 residues: Spike glycoprotein (1376 aa).

The first 13 residues, 1-13, serve as a signal peptide directing secretion; it reads MLFVFILFLPSCL. The Extracellular segment spans residues 14-1317; it reads GYIGDFRCIQ…GTYEMYVKWP (1304 aa). The 282-residue stretch at 15-296 folds into the BetaCoV S1-NTD domain; sequence YIGDFRCIQT…SYISEIKCKT (282 aa). Residues 15–330 form a receptor binding site region; it reads YIGDFRCIQT…RRVPNLPDCK (316 aa). 5 cysteine pairs are disulfide-bonded: C21-C158, C153-C187, C165-C246, C284-C294, and C329-C354. N31, N60, and N134 each carry an N-linked (GlcNAc...) asparagine; by host glycan. An N-linked (GlcNAc...) asparagine; by host glycan is attached at N192. Positions 327-618 constitute a BetaCoV S1-CTD domain; the sequence is PDCKIEEWLT…GINSGTTCST (292 aa). A glycan (N-linked (GlcNAc...) asparagine; by host) is linked at N357. Intrachain disulfides connect C372-C425 and C384-C616. 6 N-linked (GlcNAc...) asparagine; by host glycosylation sites follow: N435, N677, N709, N717, N789, and N806. 2 fusion peptide regions span residues 922-943 and 941-961; these read SAIE…VEAY and EAYN…VQSF. An N-linked (GlcNAc...) asparagine; by host glycan is attached at N945. C946 and C957 are joined by a disulfide. The interval 1022–1072 is heptad repeat 1; it reads QKMIASAFNNALGAIQEGFDATNSALGKIQSVVNANAEALNNLLNQLSNRF. A coiled-coil region spans residues 1051–1095; sequence QSVVNANAEALNNLLNQLSNRFGAISASLQEILTRLDRVEAKAQI. 5 N-linked (GlcNAc...) asparagine; by host glycosylation sites follow: N1232, N1242, N1261, N1277, and N1298. The segment at 1266 to 1306 is heptad repeat 2; the sequence is APDLSLDFEKLNVTFLDLTYEMNRIQDAIKKLNESYINLKE. Residues 1279 to 1307 adopt a coiled-coil conformation; that stretch reads TFLDLTYEMNRIQDAIKKLNESYINLKEV. A helical transmembrane segment spans residues 1318 to 1338; the sequence is WYVWLLIGLAGVAVCVLLFFI. At 1339–1376 the chain is on the cytoplasmic side; that stretch reads CCCTGCGSCCFRKCGSCCDEYGGHQDSIVIYNISAHED. Positions 1372-1376 match the KxHxx motif; sequence SAHED.

It belongs to the betacoronaviruses spike protein family. As to quaternary structure, homotrimer; each monomer consists of a S1 and a S2 subunit. The resulting peplomers protrude from the virus surface as spikes. Post-translationally, specific enzymatic cleavages in vivo yield mature proteins. The precursor is processed into S1 and S2 by host cell furin or another cellular protease to yield the mature S1 and S2 proteins. Additionally, a second cleavage leads to the release of a fusion peptide after viral attachment to host cell receptor. In terms of processing, the cytoplasmic Cys-rich domain is palmitoylated. Spike glycoprotein is digested within host endosomes.

The protein localises to the virion membrane. The protein resides in the host endoplasmic reticulum-Golgi intermediate compartment membrane. It is found in the host cell membrane. Functionally, attaches the virion to the cell membrane by interacting with host receptor, initiating the infection. In terms of biological role, mediates fusion of the virion and cellular membranes by acting as a class I viral fusion protein. Under the current model, the protein has at least three conformational states: pre-fusion native state, pre-hairpin intermediate state, and post-fusion hairpin state. During viral and target cell membrane fusion, the coiled coil regions (heptad repeats) assume a trimer-of-hairpins structure, positioning the fusion peptide in close proximity to the C-terminal region of the ectodomain. The formation of this structure appears to drive apposition and subsequent fusion of viral and target cell membranes. Acts as a viral fusion peptide which is unmasked following S2 cleavage occurring upon virus endocytosis. The chain is Spike glycoprotein from Mus musculus (Mouse).